The chain runs to 488 residues: Probable glycine dehydrogenase (decarboxylating) subunit 2 (488 aa).

An N6-(pyridoxal phosphate)lysine modification is found at Lys-274.

This sequence belongs to the GcvP family. C-terminal subunit subfamily. The glycine cleavage system is composed of four proteins: P, T, L and H. In this organism, the P 'protein' is a heterodimer of two subunits. Pyridoxal 5'-phosphate is required as a cofactor.

The catalysed reaction is N(6)-[(R)-lipoyl]-L-lysyl-[glycine-cleavage complex H protein] + glycine + H(+) = N(6)-[(R)-S(8)-aminomethyldihydrolipoyl]-L-lysyl-[glycine-cleavage complex H protein] + CO2. In terms of biological role, the glycine cleavage system catalyzes the degradation of glycine. The P protein binds the alpha-amino group of glycine through its pyridoxal phosphate cofactor; CO(2) is released and the remaining methylamine moiety is then transferred to the lipoamide cofactor of the H protein. The protein is Probable glycine dehydrogenase (decarboxylating) subunit 2 of Listeria monocytogenes serovar 1/2a (strain ATCC BAA-679 / EGD-e).